The sequence spans 489 residues: Bifunctional protein HldE (489 aa).

The tract at residues 1 to 328 (METENIHSFD…ELKAQLQDQP (328 aa)) is ribokinase. 206 to 209 (NKKE) is an ATP binding site. Residue D276 is part of the active site. Positions 357-489 (LTNGCFDLLH…IIQDIRNGRG (133 aa)) are cytidylyltransferase.

It in the N-terminal section; belongs to the carbohydrate kinase PfkB family. The protein in the C-terminal section; belongs to the cytidylyltransferase family. As to quaternary structure, homodimer.

It catalyses the reaction D-glycero-beta-D-manno-heptose 7-phosphate + ATP = D-glycero-beta-D-manno-heptose 1,7-bisphosphate + ADP + H(+). It carries out the reaction D-glycero-beta-D-manno-heptose 1-phosphate + ATP + H(+) = ADP-D-glycero-beta-D-manno-heptose + diphosphate. It functions in the pathway nucleotide-sugar biosynthesis; ADP-L-glycero-beta-D-manno-heptose biosynthesis; ADP-L-glycero-beta-D-manno-heptose from D-glycero-beta-D-manno-heptose 7-phosphate: step 1/4. It participates in nucleotide-sugar biosynthesis; ADP-L-glycero-beta-D-manno-heptose biosynthesis; ADP-L-glycero-beta-D-manno-heptose from D-glycero-beta-D-manno-heptose 7-phosphate: step 3/4. Catalyzes the phosphorylation of D-glycero-D-manno-heptose 7-phosphate at the C-1 position to selectively form D-glycero-beta-D-manno-heptose-1,7-bisphosphate. In terms of biological role, catalyzes the ADP transfer from ATP to D-glycero-beta-D-manno-heptose 1-phosphate, yielding ADP-D-glycero-beta-D-manno-heptose. The sequence is that of Bifunctional protein HldE from Desulfatibacillum aliphaticivorans.